The sequence spans 425 residues: Histidine--tRNA ligase 2 (425 aa).

The protein belongs to the class-II aminoacyl-tRNA synthetase family. In terms of assembly, homodimer.

It is found in the cytoplasm. The catalysed reaction is tRNA(His) + L-histidine + ATP = L-histidyl-tRNA(His) + AMP + diphosphate + H(+). The chain is Histidine--tRNA ligase 2 from Shouchella clausii (strain KSM-K16) (Alkalihalobacillus clausii).